Consider the following 578-residue polypeptide: Putative multidrug export ATP-binding/permease protein SAB1799c (578 aa).

The Cytoplasmic segment spans residues Met-1–Arg-15. Residues Ile-16–Leu-36 traverse the membrane as a helical segment. Residues Ile-16 to Gln-306 form the ABC transmembrane type-1 domain. At Ile-37–Leu-59 the chain is on the extracellular side. The chain crosses the membrane as a helical span at residues Thr-60 to Ile-80. The Cytoplasmic portion of the chain corresponds to Arg-81 to Gly-138. Residues Leu-139 to Leu-159 traverse the membrane as a helical segment. The Extracellular segment spans residues Asp-160–Lys-162. A helical membrane pass occupies residues Leu-163 to Gly-183. At Arg-184 to Arg-242 the chain is on the cytoplasmic side. The chain crosses the membrane as a helical span at residues Trp-243–Val-262. The Extracellular portion of the chain corresponds to Ile-263–Ala-267. Residues Tyr-268–Leu-287 form a helical membrane-spanning segment. Residues Glu-288 to Leu-578 are Cytoplasmic-facing. In terms of domain architecture, ABC transporter spans Ile-340–Ile-575. Gly-374–Ser-381 provides a ligand contact to ATP.

Belongs to the ABC transporter superfamily. As to quaternary structure, homodimer.

Its subcellular location is the cell membrane. Functionally, may be involved in multidrug export. Transmembrane domains (TMD) form a pore in the cell membrane and the ATP-binding domain (NBD) is responsible for energy generation. The sequence is that of Putative multidrug export ATP-binding/permease protein SAB1799c from Staphylococcus aureus (strain bovine RF122 / ET3-1).